Consider the following 99-residue polypeptide: uncharacterized protein (99 aa).

A helical membrane pass occupies residues 74–90; sequence FLSLPLGHSYLFLFCFW.

It is found in the membrane. This is an uncharacterized protein from Saccharomyces cerevisiae (strain ATCC 204508 / S288c) (Baker's yeast).